The chain runs to 401 residues: Phosphoglycerate kinase (401 aa).

Substrate contacts are provided by residues 23–25, arginine 39, 62–65, arginine 121, and arginine 154; these read DFN and HLGR. Residues lysine 207, glycine 298, glutamate 329, and 355–358 contribute to the ATP site; that span reads GGDT.

It belongs to the phosphoglycerate kinase family. In terms of assembly, monomer.

Its subcellular location is the cytoplasm. It carries out the reaction (2R)-3-phosphoglycerate + ATP = (2R)-3-phospho-glyceroyl phosphate + ADP. It functions in the pathway carbohydrate degradation; glycolysis; pyruvate from D-glyceraldehyde 3-phosphate: step 2/5. The sequence is that of Phosphoglycerate kinase from Campylobacter fetus subsp. fetus (strain 82-40).